The chain runs to 643 residues: Threonine--tRNA ligase (643 aa).

Positions M1–T61 constitute a TGS domain. Residues D243–P534 form a catalytic region. Residues C334, H385, and H511 each contribute to the Zn(2+) site.

Belongs to the class-II aminoacyl-tRNA synthetase family. Homodimer. It depends on Zn(2+) as a cofactor.

The protein resides in the cytoplasm. It carries out the reaction tRNA(Thr) + L-threonine + ATP = L-threonyl-tRNA(Thr) + AMP + diphosphate + H(+). Functionally, catalyzes the attachment of threonine to tRNA(Thr) in a two-step reaction: L-threonine is first activated by ATP to form Thr-AMP and then transferred to the acceptor end of tRNA(Thr). Also edits incorrectly charged L-seryl-tRNA(Thr). The sequence is that of Threonine--tRNA ligase from Haemophilus influenzae (strain 86-028NP).